Here is a 238-residue protein sequence, read N- to C-terminus: Sugar fermentation stimulation protein homolog (238 aa).

Belongs to the SfsA family.

This is Sugar fermentation stimulation protein homolog from Klebsiella pneumoniae (strain 342).